Here is a 194-residue protein sequence, read N- to C-terminus: Cysteine and glycine-rich protein 3 (194 aa).

The interval 1–5 is interaction with TCAP; the sequence is MPNWG. An LIM zinc-binding 1 domain is found at 10-61; the sequence is CGACEKTVYHAEEIQCNGRSFHKTCFHCMACRKALDSTTVAAHESEIYCKVC. The Nuclear localization signal motif lies at 64–69; sequence RRYGPK. Residues 94 to 105 are interaction with CLF2; that stretch reads QSPKPARAATTS. Serine 95, serine 111, and serine 153 each carry phosphoserine. The region spanning 120 to 171 is the LIM zinc-binding 2 domain; that stretch reads CPRCGKSVYAAEKVMGGGKPWHKTCFRCAICGKSLESTNVTDKDGELYCKVC.

Self-associates. Oligomeric in the cytoplasm and monomeric in the nucleus. Homooligomers preferentially form along the actin cytoskeleton. Interacts with TCAP. Interacts with LDHD, MYOD1, MYOG, ACTN2, NRAP, MYF6. Interacts (via N-terminus)D with GLRX3 (via C-terminus) and PPP3CA; GLRX3 and calcineurin compete for interaction with CSRP3. Interacts with CFL2; the stoichiometry influences F-actin depolymerization and possibly two molecules of CFL2 can interact with one molecule of CSRP3 resulting in the highest functional impact; the interaction is stronger with phosphorylated CFL2. In terms of processing, phosphorylated by PKC/PRKCA.

It localises to the nucleus. The protein resides in the cytoplasm. It is found in the cytoskeleton. Its subcellular location is the myofibril. The protein localises to the sarcomere. It localises to the z line. Functionally, positive regulator of myogenesis. Acts as a cofactor for myogenic bHLH transcription factors such as MYOD1, and probably MYOG and MYF6. Enhances the DNA-binding activity of the MYOD1:TCF3 isoform E47 complex and may promote formation of a functional MYOD1:TCF3 isoform E47:MEF2A complex involved in myogenesis. Plays a crucial and specific role in the organization of cytosolic structures in cardiomyocytes. Could play a role in mechanical stretch sensing. May be a scaffold protein that promotes the assembly of interacting proteins at Z-line structures. It is essential for calcineurin anchorage to the Z line. Required for stress-induced calcineurin-NFAT activation. The role in regulation of cytoskeleton dynamics by association with CFL2 is reported conflictingly. Proposed to contribute to the maintenance of muscle cell integrity through an actin-based mechanism. Can directly bind to actin filaments, cross-link actin filaments into bundles without polarity selectivity and protect them from dilution- and cofilin-mediated depolymerization; the function seems to involve its self-association. In vitro can inhibit PKC/PRKCA activity. Proposed to be involved in cardiac stress signaling by down-regulating excessive PKC/PRKCA signaling. This is Cysteine and glycine-rich protein 3 (Csrp3) from Mus musculus (Mouse).